The chain runs to 602 residues: Elongation factor 4 (602 aa).

In terms of domain architecture, tr-type G spans 7–188 (ENIRNFSIIA…SIIRLVPPPK (182 aa)). GTP-binding positions include 19-24 (DHGKST) and 135-138 (NKID).

The protein belongs to the TRAFAC class translation factor GTPase superfamily. Classic translation factor GTPase family. LepA subfamily.

The protein localises to the cell inner membrane. The enzyme catalyses GTP + H2O = GDP + phosphate + H(+). Its function is as follows. Required for accurate and efficient protein synthesis under certain stress conditions. May act as a fidelity factor of the translation reaction, by catalyzing a one-codon backward translocation of tRNAs on improperly translocated ribosomes. Back-translocation proceeds from a post-translocation (POST) complex to a pre-translocation (PRE) complex, thus giving elongation factor G a second chance to translocate the tRNAs correctly. Binds to ribosomes in a GTP-dependent manner. The polypeptide is Elongation factor 4 (Chlamydia trachomatis serovar D (strain ATCC VR-885 / DSM 19411 / UW-3/Cx)).